The primary structure comprises 106 residues: MSDPKESAAVASLYNTYPFPPEPILDEPPPGYNWRWNWQAAYSFCTGQKPSRDNIRILDAGCGSGVSTEYLVHLNPEATVVGIDLSEGTLAVAKERCQRSEQLEPN.

This is an uncharacterized protein from Pseudanabaena tenuis (strain PCC 7409).